Here is a 146-residue protein sequence, read N- to C-terminus: Large ribosomal subunit protein uL24z (146 aa).

Disordered stretches follow at residues Met1–Arg26 and Lys121–Asp146. Basic residues predominate over residues Ser9–His18. The span at Lys121–Ser138 shows a compositional bias: basic and acidic residues.

This sequence belongs to the universal ribosomal protein uL24 family.

This chain is Large ribosomal subunit protein uL24z (RPL26A), found in Arabidopsis thaliana (Mouse-ear cress).